The primary structure comprises 304 residues: tRNA-uridine aminocarboxypropyltransferase 1 (304 aa).

Disordered stretches follow at residues Met-1 to Ser-29 and Arg-165 to Thr-193. The span at Arg-180 to Thr-193 shows a compositional bias: basic and acidic residues. The DXTW signature appears at Asp-206–Trp-209.

The protein belongs to the TDD superfamily. DTWD1 family.

Its subcellular location is the nucleus. It carries out the reaction a uridine in tRNA + S-adenosyl-L-methionine = a 3-[(3S)-3-amino-3-carboxypropyl]uridine in tRNA + S-methyl-5'-thioadenosine + H(+). Its function is as follows. Catalyzes the formation of 3-(3-amino-3-carboxypropyl)uridine (acp3U) at position 20 in the D-loop of several cytoplasmic tRNAs (acp3U(20)). The protein is tRNA-uridine aminocarboxypropyltransferase 1 of Mus musculus (Mouse).